We begin with the raw amino-acid sequence, 207 residues long: LexA repressor (207 aa).

Positions 28–48 (RAEISRELGFKSANAAEEHLK) form a DNA-binding region, H-T-H motif. Residues Ser123 and Lys160 each act as for autocatalytic cleavage activity in the active site.

Belongs to the peptidase S24 family. As to quaternary structure, homodimer.

The enzyme catalyses Hydrolysis of Ala-|-Gly bond in repressor LexA.. Represses a number of genes involved in the response to DNA damage (SOS response), including recA and lexA. In the presence of single-stranded DNA, RecA interacts with LexA causing an autocatalytic cleavage which disrupts the DNA-binding part of LexA, leading to derepression of the SOS regulon and eventually DNA repair. This chain is LexA repressor, found in Haemophilus influenzae (strain ATCC 51907 / DSM 11121 / KW20 / Rd).